The chain runs to 259 residues: Zinc import ATP-binding protein ZnuC (259 aa).

Positions 11–225 (IRLENIYVHR…PEYLAIFGGQ (215 aa)) constitute an ABC transporter domain. Residue 43-50 (GPNGAGKS) participates in ATP binding.

It belongs to the ABC transporter superfamily. Zinc importer (TC 3.A.1.15.5) family. As to quaternary structure, the complex is composed of two ATP-binding proteins (ZnuC), two transmembrane proteins (ZnuB) and a solute-binding protein (ZnuA).

The protein resides in the cell inner membrane. The catalysed reaction is Zn(2+)(out) + ATP(in) + H2O(in) = Zn(2+)(in) + ADP(in) + phosphate(in) + H(+)(in). Part of the ABC transporter complex ZnuABC involved in zinc import. Responsible for energy coupling to the transport system. This Acinetobacter baylyi (strain ATCC 33305 / BD413 / ADP1) protein is Zinc import ATP-binding protein ZnuC.